A 127-amino-acid chain; its full sequence is Small ribosomal subunit protein uS13 (127 aa).

A disordered region spans residues 100-127 (GQRTRTNARTRKGVRKTVAGKKKAPAKK). Over residues 101–127 (QRTRTNARTRKGVRKTVAGKKKAPAKK) the composition is skewed to basic residues.

Belongs to the universal ribosomal protein uS13 family. In terms of assembly, part of the 30S ribosomal subunit. Forms a loose heterodimer with protein S19. Forms two bridges to the 50S subunit in the 70S ribosome.

Its function is as follows. Located at the top of the head of the 30S subunit, it contacts several helices of the 16S rRNA. In the 70S ribosome it contacts the 23S rRNA (bridge B1a) and protein L5 of the 50S subunit (bridge B1b), connecting the 2 subunits; these bridges are implicated in subunit movement. Contacts the tRNAs in the A and P-sites. The sequence is that of Small ribosomal subunit protein uS13 from Synechococcus sp. (strain JA-3-3Ab) (Cyanobacteria bacterium Yellowstone A-Prime).